The primary structure comprises 369 residues: Biotin synthase (369 aa).

The region spanning 51-269 is the Radical SAM core domain; that stretch reads NYVQVSTLLS…IAVARIMMPK (219 aa). Residues Cys-66, Cys-70, and Cys-73 each coordinate [4Fe-4S] cluster. Residues Cys-110, Cys-141, Cys-201, and Arg-273 each contribute to the [2Fe-2S] cluster site.

This sequence belongs to the radical SAM superfamily. Biotin synthase family. Homodimer. Requires [4Fe-4S] cluster as cofactor. The cofactor is [2Fe-2S] cluster.

It catalyses the reaction (4R,5S)-dethiobiotin + (sulfur carrier)-SH + 2 reduced [2Fe-2S]-[ferredoxin] + 2 S-adenosyl-L-methionine = (sulfur carrier)-H + biotin + 2 5'-deoxyadenosine + 2 L-methionine + 2 oxidized [2Fe-2S]-[ferredoxin]. Its pathway is cofactor biosynthesis; biotin biosynthesis; biotin from 7,8-diaminononanoate: step 2/2. Catalyzes the conversion of dethiobiotin (DTB) to biotin by the insertion of a sulfur atom into dethiobiotin via a radical-based mechanism. This is Biotin synthase from Pseudoalteromonas atlantica (strain T6c / ATCC BAA-1087).